A 303-amino-acid polypeptide reads, in one-letter code: Hemolysin C (303 aa).

2 consecutive CBS domains span residues 81–143 (MVPR…NSPL) and 146–203 (LIRK…IDDE).

The protein belongs to the UPF0053 family. Hemolysin C subfamily.

This chain is Hemolysin C (tlyC), found in Rickettsia prowazekii (strain Madrid E).